Reading from the N-terminus, the 171-residue chain is Calcium-binding protein F-like (171 aa).

EF-hand domains follow at residues 6–41 (KIFEEVQNFVQNYDLNKDGSVTSYDIYLSFLKKMNG), 57–80 (IDMDHDGKFTYCEIAKYCVDKAKK), 89–124 (AALADVEAMLLRFDKDKDKKLSQTEFLEYFKGRGYT), and 130–159 (DQYLKIIDLDKDGCVSVNELQEWFKKRRID). Ca(2+)-binding residues include aspartate 19, asparagine 21, aspartate 23, serine 25, and aspartate 30. 10 residues coordinate Ca(2+): aspartate 102, aspartate 104, aspartate 106, lysine 108, glutamate 113, aspartate 137, aspartate 139, aspartate 141, cysteine 143, and glutamate 148.

In Dictyostelium discoideum (Social amoeba), this protein is Calcium-binding protein F-like (cbp12).